The chain runs to 865 residues: Xylosyltransferase 2 (865 aa).

The Cytoplasmic segment spans residues 1-15 (MVASARVQKLVRRYK). Residues 16 to 36 (LAIATALAILLLQGLVVWSFS) traverse the membrane as a helical; Signal-anchor for type II membrane protein segment. Over 37–865 (GLEEDEPGEK…GPVKADGRLR (829 aa)) the chain is Lumenal. The segment at 39-155 (EEDEPGEKGR…SVEGAPQPTD (117 aa)) is disordered. A compositionally biased stretch (basic and acidic residues) spans 53-65 (RPLDPGEGSKDTD). Residues 73–82 (SAGRRHGRWR) are compositionally biased toward basic residues. N-linked (GlcNAc...) asparagine glycosylation is present at asparagine 122. 4 disulfide bridges follow: cysteine 162–cysteine 190, cysteine 206–cysteine 448, cysteine 467–cysteine 480, and cysteine 469–cysteine 478. Residues valine 239, aspartate 267, and 296 to 298 (TIW) contribute to the UDP-alpha-D-xylose site. N-linked (GlcNAc...) asparagine glycosylation is present at asparagine 327. 400-401 (DW) is a UDP-alpha-D-xylose binding site. UDP-alpha-D-xylose is bound by residues serine 481 and 504-505 (RK). 2 disulfides stabilise this stretch: cysteine 581/cysteine 833 and cysteine 826/cysteine 839. An N-linked (GlcNAc...) asparagine glycan is attached at asparagine 683.

This sequence belongs to the glycosyltransferase 14 family. XylT subfamily. Monomer. The cofactor is Mg(2+). Requires Mn(2+) as cofactor. Post-translationally, contains disulfide bonds. Detected in brain, liver, lung, kidney, heart, spleen and testis, and at lower levels in skeletal muscle.

The protein resides in the golgi apparatus membrane. It localises to the secreted. It catalyses the reaction UDP-alpha-D-xylose + L-seryl-[protein] = 3-O-(beta-D-xylosyl)-L-seryl-[protein] + UDP + H(+). Its pathway is glycan metabolism; chondroitin sulfate biosynthesis. The protein operates within glycan metabolism; heparan sulfate biosynthesis. Functionally, catalyzes the first step in the biosynthesis of chondroitin sulfate, heparan sulfate and dermatan sulfate proteoglycans, such as DCN. Transfers D-xylose from UDP-D-xylose to specific serine residues of the core protein. The sequence is that of Xylosyltransferase 2 (Xylt2) from Mus musculus (Mouse).